The primary structure comprises 242 residues: 7-cyano-7-deazaguanine synthase (242 aa).

13-23 contacts ATP; it reads FSGGQDSSVCL. C201, C216, C219, and C222 together coordinate Zn(2+).

Belongs to the QueC family. Requires Zn(2+) as cofactor.

The enzyme catalyses 7-carboxy-7-deazaguanine + NH4(+) + ATP = 7-cyano-7-deazaguanine + ADP + phosphate + H2O + H(+). The protein operates within purine metabolism; 7-cyano-7-deazaguanine biosynthesis. In terms of biological role, catalyzes the ATP-dependent conversion of 7-carboxy-7-deazaguanine (CDG) to 7-cyano-7-deazaguanine (preQ(0)). The protein is 7-cyano-7-deazaguanine synthase of Caulobacter vibrioides (strain ATCC 19089 / CIP 103742 / CB 15) (Caulobacter crescentus).